Reading from the N-terminus, the 124-residue chain is Small ribosomal subunit protein uS12 (124 aa).

D89 bears the 3-methylthioaspartic acid mark.

Belongs to the universal ribosomal protein uS12 family. In terms of assembly, part of the 30S ribosomal subunit. Contacts proteins S8 and S17. May interact with IF1 in the 30S initiation complex.

Functionally, with S4 and S5 plays an important role in translational accuracy. In terms of biological role, interacts with and stabilizes bases of the 16S rRNA that are involved in tRNA selection in the A site and with the mRNA backbone. Located at the interface of the 30S and 50S subunits, it traverses the body of the 30S subunit contacting proteins on the other side and probably holding the rRNA structure together. The combined cluster of proteins S8, S12 and S17 appears to hold together the shoulder and platform of the 30S subunit. This is Small ribosomal subunit protein uS12 from Tolumonas auensis (strain DSM 9187 / NBRC 110442 / TA 4).